Reading from the N-terminus, the 546-residue chain is Glucose-6-phosphate isomerase (546 aa).

E352 (proton donor) is an active-site residue. Residues H383 and K511 contribute to the active site.

Belongs to the GPI family.

Its subcellular location is the cytoplasm. It catalyses the reaction alpha-D-glucose 6-phosphate = beta-D-fructose 6-phosphate. Its pathway is carbohydrate biosynthesis; gluconeogenesis. The protein operates within carbohydrate degradation; glycolysis; D-glyceraldehyde 3-phosphate and glycerone phosphate from D-glucose: step 2/4. Catalyzes the reversible isomerization of glucose-6-phosphate to fructose-6-phosphate. This Paramagnetospirillum magneticum (strain ATCC 700264 / AMB-1) (Magnetospirillum magneticum) protein is Glucose-6-phosphate isomerase.